We begin with the raw amino-acid sequence, 212 residues long: Ribonuclease HII (212 aa).

The RNase H type-2 domain occupies 20-209 (TCVVGVDEVG…VHNILYQEAS (190 aa)). A divalent metal cation contacts are provided by Asp26, Glu27, and Asp117.

This sequence belongs to the RNase HII family. Mn(2+) serves as cofactor. It depends on Mg(2+) as a cofactor.

It localises to the cytoplasm. The enzyme catalyses Endonucleolytic cleavage to 5'-phosphomonoester.. Its function is as follows. Endonuclease that specifically degrades the RNA of RNA-DNA hybrids. This Cereibacter sphaeroides (strain ATCC 17029 / ATH 2.4.9) (Rhodobacter sphaeroides) protein is Ribonuclease HII.